We begin with the raw amino-acid sequence, 345 residues long: Protein RecA (345 aa).

Position 66 to 73 (66 to 73 (GPESSGKT)) interacts with ATP.

It belongs to the RecA family.

The protein resides in the cytoplasm. In terms of biological role, can catalyze the hydrolysis of ATP in the presence of single-stranded DNA, the ATP-dependent uptake of single-stranded DNA by duplex DNA, and the ATP-dependent hybridization of homologous single-stranded DNAs. It interacts with LexA causing its activation and leading to its autocatalytic cleavage. The polypeptide is Protein RecA (Helicobacter hepaticus (strain ATCC 51449 / 3B1)).